A 66-amino-acid chain; its full sequence is Small ribosomal subunit protein eS27 (66 aa).

Zn(2+) is bound by residues C21, C24, C40, and C43. A C4-type zinc finger spans residues 21 to 43 (CRQCNNEQVIFSNATFPVRCLSC).

The protein belongs to the eukaryotic ribosomal protein eS27 family. In terms of assembly, part of the 30S ribosomal subunit. Zn(2+) is required as a cofactor.

In Sulfolobus acidocaldarius (strain ATCC 33909 / DSM 639 / JCM 8929 / NBRC 15157 / NCIMB 11770), this protein is Small ribosomal subunit protein eS27.